Consider the following 308-residue polypeptide: Tetraspanin-12 (308 aa).

Over 1-41 (MANRRQPVQHRAQQRVYRQSQIRYAPGAGGESEISCCVKYS) the chain is Cytoplasmic. The chain crosses the membrane as a helical span at residues 42–62 (VFSFNVIFFLLGFGLLLFGVW). At 63–86 (AQIEKNTFVNMLSKASKLYLDPTW) the chain is on the extracellular side. The helical transmembrane segment at 87 to 107 (PLLIVGFLTFIIGFSGCVGSL) threads the bilayer. At 108–112 (RENTS) the chain is on the cytoplasmic side. Residues 113-133 (FLTFYSTLLGLLLIAEFSAGV) traverse the membrane as a helical segment. Residues 134–268 (FAYACRDQLD…PKLQLWLNNN (135 aa)) lie on the Extracellular side of the membrane. N-linked (GlcNAc...) asparagine glycosylation occurs at N213. Residues 269–289 (MLLVAVSMVIIAIIQVLGICF) traverse the membrane as a helical segment. Over 290-308 (AQNLKSDILAQRAKWYYTH) the chain is Cytoplasmic.

The protein belongs to the tetraspanin (TM4SF) family. May interact with protease sup-17; the interaction promotes sup-17 cell membrane localization. Expressed in the germline.

The protein resides in the cell membrane. It is found in the cytoplasmic vesicle membrane. Its subcellular location is the endosome membrane. The protein localises to the early endosome membrane. It localises to the late endosome membrane. The protein resides in the recycling endosome membrane. It is found in the golgi apparatus. Its subcellular location is the trans-Golgi network membrane. Its function is as follows. Functions redundantly with tsp-14 isoform a to regulate body size, embryonic and vulva development. Functions redundantly with tsp-14 (isoforms a and b) to regulate cell fate specification in the postembryonic mesodermal M lineage and male development. May regulate BMP-like Sma/Mab signaling by mediating protease sup-17 trafficking to the cell surface. Together with tsp-14, functions redundantly to maintain cell surface levels of the BMP type II receptor daf-4 (but not BMP type I receptor sma-6), probably by regulating endosomal sorting of receptors and their targeting to degradative lysosomes. Together with tsp-14 involved in maintaining the structural and functional integrity of the endosomal network. Together with tsp-14, probably acts by modulating the activation of glp-1, a Notch-like receptor, to regulate germline maturation. Probably acts by modulating the activation of lin-12, a Notch-like receptor, to regulate cell fate specification such as the anchor cell/ventral uterine precursor cell decision. This Caenorhabditis elegans protein is Tetraspanin-12.